We begin with the raw amino-acid sequence, 261 residues long: 5'-nucleotidase SurE (261 aa).

Residues aspartate 8, aspartate 9, serine 43, and asparagine 96 each coordinate a divalent metal cation.

The protein belongs to the SurE nucleotidase family. A divalent metal cation is required as a cofactor.

It localises to the cytoplasm. It carries out the reaction a ribonucleoside 5'-phosphate + H2O = a ribonucleoside + phosphate. Its function is as follows. Nucleotidase that shows phosphatase activity on nucleoside 5'-monophosphates. The sequence is that of 5'-nucleotidase SurE from Cereibacter sphaeroides (strain KD131 / KCTC 12085) (Rhodobacter sphaeroides).